A 987-amino-acid chain; its full sequence is Ephrin type-B receptor 2 (987 aa).

Positions 1-19 (MGPLWFCCLPLALLPLLAA) are cleaved as a signal peptide. Residues 20–544 (VEETLMDSTT…QTSVQEKLPL (525 aa)) are Extracellular-facing. Positions 21 to 203 (EETLMDSTTA…FYRKCPRVIQ (183 aa)) constitute an Eph LBD domain. 2 cysteine pairs are disulfide-bonded: Cys63–Cys185 and Cys98–Cys108. Asn266, Asn337, Asn429, Asn478, and Asn483 each carry an N-linked (GlcNAc...) asparagine glycan. Fibronectin type-III domains follow at residues 325–435 (IPSA…TNQA) and 436–531 (APSA…TMTE). A helical transmembrane segment spans residues 545–565 (IIGSSAAGLVFLIAVVVIIIV). Residues 566–987 (CNRRGFERAD…QMNQIQSVEV (422 aa)) lie on the Cytoplasmic side of the membrane. The Protein kinase domain occupies 622–885 (VKIEQVIGAG…QIVNTLDKMI (264 aa)). ATP-binding positions include 628-636 (IGAGEFGEV) and Lys654. Asp747 serves as the catalytic Proton acceptor. A Glycyl lysine isopeptide (Lys-Gly) (interchain with G-Cter in ubiquitin) cross-link involves residue Lys892. Positions 914-978 (TSFNTVDEWL…LNSIQVMRAQ (65 aa)) constitute an SAM domain. The PDZ-binding signature appears at 985 to 987 (VEV).

It belongs to the protein kinase superfamily. Tyr protein kinase family. Ephrin receptor subfamily. In terms of assembly, heterotetramer upon binding of the ligand. The heterotetramer is composed of an ephrin dimer and a receptor dimer. Oligomerization is probably required to induce biological responses. In terms of processing, ligand binding induces cleavage by matrix metalloproteinases (MMPs) such as MMP7/MMP9, producing an EphB2/N-terminal fragment (NTF) and a C-terminal long fragment (EphB2-LF). EphB2-LF is further cleaved by MMPs, producing EphB2/CTF1 which is further cleaved by the PS1/gamma-secretase producing EphB2/CTF2. Polyubiquitinated; ligand binding stimulates ubiquitination. Ubiquitinated by RNF186 at Lys-892, mainly through 'Lys-27'-linked polyubiquitin chains.

It is found in the cell membrane. Its subcellular location is the cell projection. The protein localises to the axon. It localises to the dendrite. It carries out the reaction L-tyrosyl-[protein] + ATP = O-phospho-L-tyrosyl-[protein] + ADP + H(+). In terms of biological role, receptor tyrosine kinase which binds promiscuously transmembrane ephrin-B family ligands residing on adjacent cells, leading to contact-dependent bidirectional signaling into neighboring cells. The signaling pathway downstream of the receptor is referred to as forward signaling while the signaling pathway downstream of the ephrin ligand is referred to as reverse signaling. Functions in axon guidance during development. In addition to axon guidance, also regulates dendritic spines development and maturation and stimulates the formation of excitatory synapses. This chain is Ephrin type-B receptor 2 (EPHB2), found in Coturnix japonica (Japanese quail).